Consider the following 138-residue polypeptide: TIKPFACTKCKRRFCSNKELFSHKRIHTGRPFVCAVCGKYFSDRIILQAHQRLHTGEKPFTCTQCHKSFLYKRNLHQHQQIHQKHKPYVCSTCGKQLKSKLTLNQHMKTHSNIKPFACSECSKSFRFKAHLHRHQESH.

C2H2-type zinc fingers lie at residues 5–27 (FACT…KRIH), 32–54 (FVCA…QRLH), 60–82 (FTCT…QQIH), 88–110 (YVCS…MKTH), and 116–138 (FACS…QESH).

Belongs to the krueppel C2H2-type zinc-finger protein family.

Its subcellular location is the nucleus. In terms of biological role, may be involved in transcriptional regulation. The protein is Gastrula zinc finger protein XlCGF44.2 of Xenopus laevis (African clawed frog).